The primary structure comprises 238 residues: MSEAYRQPVLGVIGGSGVYDIDGLEGARWQTVESPFGDVSDQILRGTLDGLEMAFLPRHGRGHVLAPSDVNYRANIDALKRAGVTEILSVSAVGSLAEDLPPGTFVIADQFIDRTFAREKSFFRQGSGRPCQHGPSGQRLAGRSRRRGSGRSGHSPSPGRHLSVHGGAAVLDPGRKQSLSAMGLPRHRHDQHARGQAGPRSRDRLLHRGHGHRFRLLAPRSRPRQRRGGGSRAAAKRR.

Disordered stretches follow at residues 123–167 and 180–238; these read FRQG…VHGG and SAMG…AKRR. Residues 152 to 161 show a composition bias toward low complexity; the sequence is SGHSPSPGRH. Over residues 207 to 238 the composition is skewed to basic residues; it reads HRGHGHRFRLLAPRSRPRQRRGGGSRAAAKRR.

Belongs to the PNP/MTAP phosphorylase family.

This is an uncharacterized protein from Rhodospirillum rubrum.